The chain runs to 188 residues: Diphosphoinositol polyphosphate phosphohydrolase DDP1 (188 aa).

Residues 1–21 show a composition bias toward basic and acidic residues; it reads MGKTADNHGPVRSETAREGRE. A disordered region spans residues 1–23; sequence MGKTADNHGPVRSETAREGRENQ. The 150-residue stretch at 30-179 folds into the Nudix hydrolase domain; sequence GARLVAGCIC…KRPELLEALN (150 aa). Residues Arg-32, Ser-52, Ser-53, and Lys-63 each coordinate 1D-myo-inositol hexakisphosphate. Residues Arg-32, Ser-52, Ser-53, and Lys-63 each contribute to the 5-diphospho-1D-myo-inositol 1,2,3,4,6-pentakisphosphate site. Positions 32, 52, 53, and 63 each coordinate P(1),P(5)-bis(5'-adenosyl) pentaphosphate. Mg(2+) is bound by residues Lys-63, Glu-80, and Glu-84. Positions 65 to 86 match the Nudix box motif; it reads GVEKDEPNYETTAQRETWEEAG. Position 100 (Asp-100) interacts with P(1),P(5)-bis(5'-adenosyl) pentaphosphate. Arg-102, Arg-129, Arg-152, and Arg-171 together coordinate 1D-myo-inositol hexakisphosphate. Arg-102 contributes to the 5-diphospho-1D-myo-inositol 1,2,3,4,6-pentakisphosphate binding site. 5-diphospho-1D-myo-inositol 1,2,3,4,6-pentakisphosphate is bound by residues Arg-152 and Arg-171. P(1),P(5)-bis(5'-adenosyl) pentaphosphate-binding residues include Arg-152, Arg-171, and Glu-173.

Belongs to the Nudix hydrolase family. DIPP subfamily. Mg(2+) is required as a cofactor. The cofactor is Mn(2+). Zn(2+) serves as cofactor.

It is found in the cytoplasm. The protein localises to the nucleus. The enzyme catalyses diphospho-myo-inositol polyphosphate + H2O = myo-inositol polyphosphate + phosphate.. The catalysed reaction is P(1),P(6)-bis(5'-adenosyl) hexaphosphate + H2O = adenosine 5'-pentaphosphate + AMP + 2 H(+). It catalyses the reaction P(1),P(5)-bis(5'-adenosyl) pentaphosphate + H2O = adenosine 5'-tetraphosphate + AMP + 2 H(+). It carries out the reaction [phosphate](n+1) + n H2O = (n+1) phosphate + n H(+). May eliminate potentially toxic dinucleoside polyphosphates during sporulation. Most active against diadenosine 5',5'''-P1,P6-hexaphosphate (Ap6A). Can also hydrolyze diadenosine 5',5'''-P1,P5-pentaphosphate (Ap5A), adenosine 5'-pentaphosphate (p5A), and adenosine 5'-tetraphosphate (p4A) are also substrates, but not diadenosine 5',5'''-P1,P4-tetraphosphate (Ap4A) or other dinucleotides, mononucleotides, nucleotide sugars, or nucleotide alcohols. Also cleaves a beta-phosphate from the diphosphate groups in PP-InsP5 (diphosphoinositol pentakisphosphate) and [PP]2-InsP4 (bisdiphosphoinositol tetrakisphosphate). Also has endopolyphosphatase activity. This is Diphosphoinositol polyphosphate phosphohydrolase DDP1 (DDP1) from Saccharomyces cerevisiae (strain ATCC 204508 / S288c) (Baker's yeast).